A 770-amino-acid polypeptide reads, in one-letter code: Cullin-1 (770 aa).

Residues 700–761 form the Cullin neddylation domain; sequence DRKLQIQAAI…EKEYLMRVEG (62 aa). Lysine 714 is covalently cross-linked (Glycyl lysine isopeptide (Lys-Gly) (interchain with G-Cter in NEDD8)).

The protein belongs to the cullin family. Part of a complex that includes culA, fbxA and regA. Formation of this complex is dependent on the MAP kinase erkB. Neddylated; which enhances the ubiquitination activity of SCF.

Its pathway is protein modification; protein ubiquitination. In terms of biological role, probable core component of cullin-based SCF-like E3 ubiquitin-protein ligase complexes which mediate the ubiquitination and subsequent proteasomal degradation of target proteins. The E3 ubiquitin-protein ligase activity of the complex is dependent on the neddylation of the cullin subunit. Required at several stages during development. CulA and fbxA regulate multicellular development by targeting regA for degradation via a pathway that requires erkB function, leading to an increase in cAMP and PKA activity. The polypeptide is Cullin-1 (culA) (Dictyostelium discoideum (Social amoeba)).